Consider the following 333-residue polypeptide: Glutamyl endopeptidase (333 aa).

An N-terminal signal peptide occupies residues 1–29 (MKGKFLKVSSLFVATLTTATLVSSPAANA). The propeptide occupies 30-68 (LSSKAMDNHPQQSQSSKQQTPKIQKGGNLKPLEQREHAN). Positions 33 to 61 (KAMDNHPQQSQSSKQQTPKIQKGGNLKPL) are disordered. Positions 40–54 (QQSQSSKQQTPKIQK) are enriched in low complexity. Residues H119, D161, and S237 each act as charge relay system in the active site. The disordered stretch occupies residues 283–333 (FANDDQPNNPDNPDNPNNPDNPNNPDNPNNPNNPDNPDNGDNNNSDNPDAA). The segment covering 286–333 (DDQPNNPDNPDNPNNPDNPNNPDNPNNPNNPDNPDNGDNNNSDNPDAA) has biased composition (low complexity). A run of 11 repeats spans residues 289–291 (PNN), 292–294 (PDN), 295–297 (PDN), 298–300 (PNN), 301–303 (PDN), 304–306 (PNN), 307–309 (PDN), 310–312 (PNN), 313–315 (PNN), 316–318 (PDN), and 319–321 (PDN). The interval 289–321 (PNNPDNPDNPNNPDNPNNPDNPNNPNNPDNPDN) is 11 X 3 AA repeats of P-[DN]-N.

The protein belongs to the peptidase S1B family. Proteolytically cleaved by aureolysin (aur). This cleavage leads to the activation of SspA.

The protein resides in the secreted. The catalysed reaction is Preferential cleavage: Glu-|-Xaa, Asp-|-Xaa.. In terms of biological role, preferentially cleaves peptide bonds on the carboxyl-terminal side of aspartate and glutamate. Along with other extracellular proteases it is involved in colonization and infection of human tissues. Required for proteolytic maturation of thiol protease SspB and inactivation of SspC, an inhibitor of SspB. It is the most important protease for degradation of fibronectin-binding protein (FnBP) and surface protein A, which are involved in adherence to host cells. May also protect bacteria against host defense mechanism by cleaving the immunoglobulin classes IgG, IgA and IgM. May be involved in the stability of secreted lipases. This chain is Glutamyl endopeptidase (sspA), found in Staphylococcus aureus (strain MSSA476).